The primary structure comprises 612 residues: Transcription factor unc-37 (612 aa).

Positions 143 to 228 (FASPHVNGGD…SNSRARQQQQ (86 aa)) are disordered. Residues 150–159 (GGDGAGGSSG) show a composition bias toward gly residues. Residues 153-196 (GAGGSSGGASEAKKAKLEDPDDGELEIDVTNDDHPSTASNGGAA) form a CCN domain region. The span at 171 to 182 (DPDDGELEIDVT) shows a compositional bias: acidic residues. Residues 202 to 221 (DSTNSVASSGASTPSIASNS) are compositionally biased toward polar residues. 6 WD repeats span residues 308–339 (GIPT…RVYT), 372–402 (LKEN…ALWD), 414–444 (TDSQ…LIYD), 456–486 (GHQD…RCWD), 538–568 (QHES…NAWR), and 579–609 (KENS…TLYA).

The protein belongs to the WD repeat Groucho/TLE family. Interacts with unc-4. Interacts with ref-1. May interact with mls-1.

The protein localises to the nucleus. Its function is as follows. Transcriptional corepressor that functions with the neural specificity gene unc-4 to govern motor neuron identity. In concert with unc-4, represses the expression of VB-specific genes such as ceh-12, thereby preventing the adoption of VB motor neuron fate. May function with transcription factor mls-1 to promote uterine muscle specification and formation. The polypeptide is Transcription factor unc-37 (unc-37) (Caenorhabditis elegans).